Here is an 89-residue protein sequence, read N- to C-terminus: Protein FAM25A (89 aa).

Belongs to the FAM25 family.

This chain is Protein FAM25A, found in Homo sapiens (Human).